The following is a 306-amino-acid chain: MLRWTRAWRLPREGLGPHGPSFARVPVAPSSSSGGRGGAEPRPLPLSYRLLDGEAALPAVVFLHGLFGSKTNFNSIAKILAQQTGRRVLTVDARNHGDSPHSPDMSYEIMSQDLQDLLPQLGLVPCVVVGHSMGGKTAMLLALQRPELVERLIAVDISPVESTGVSHFATYVAAMRAINIADELPRSRARKLADEQLSSVIQDMAVRQHLLTNLVEVDGRFVWRVNLDALTQHLDKILAFPQRQESYLGPTLFLLGGNSQFVHPSHHPEIMRLFPRAQMQTVPNAGHWIHADRPQDFIAAIRGFLV.

The disordered stretch occupies residues 19-40 (GPSFARVPVAPSSSSGGRGGAE). Residues 23-33 (ARVPVAPSSSS) are compositionally biased toward low complexity. K78 is subject to N6-succinyllysine. Active-site charge relay system residues include S132, D228, and H287.

Belongs to the AB hydrolase superfamily. As to quaternary structure, interacts with OGDH and DLST; this interaction maintains the functional lipoylation of the 2-oxoglutarate dehydrogenase complex. Phosphorylated. As to expression, ubiquitously expressed. Highly expressed in small intestine, prostate and thyroid, while aorta and colon tissues exhibit weak expression levels.

The protein resides in the mitochondrion. The protein localises to the mitochondrion matrix. It catalyses the reaction 1-octadecanoyl-2-(5Z,8Z,11Z,14Z-eicosatetraenoyl)-sn-glycerol + H2O = 2-(5Z,8Z,11Z,14Z-eicosatetraenoyl)-glycerol + octadecanoate + H(+). The catalysed reaction is a 1,2-diacyl-sn-glycerol + H2O = a 2-acylglycerol + a fatty acid + H(+). It carries out the reaction a 1,3-diacyl-sn-glycerol + H2O = a 1-acyl-sn-glycerol + a fatty acid + H(+). The enzyme catalyses 1-octadecanoyl-2-(9Z-octadecenoyl)-sn-glycerol + H2O = 2-(9Z-octadecenoyl)-glycerol + octadecanoate + H(+). It catalyses the reaction 1-octadecanoyl-2-(4Z,7Z,10Z,13Z,16Z,19Z-docosahexaenoyl)-sn-glycerol + H2O = 2-(4Z,7Z,10Z,13Z,16Z,19Z-docosahexaenoyl)-glycerol + octadecanoate + H(+). The catalysed reaction is 1,2-didecanoylglycerol + H2O = decanoylglycerol + decanoate + H(+). Its function is as follows. Catalyzes the hydrolysis of diacylglycerol in vitro and may function as a key regulator in lipid metabolism, namely by regulating the intracellular levels of diacylglycerol. 1,2-diacyl-sn-glycerols are the preferred substrate over 1,3-diacyl-sn-glycerols. The enzyme hydrolyzes stearate in preference to palmitate from the sn-1 position of 1,2-diacyl-sn-glycerols. Maintains the functional lipoylation of the 2-oxoglutarate dehydrogenase complex (OGDHc) through its interaction with the OGDHc by preventing the formation of lipoyl adducts. In addition, is also required for the expansion and differentiation of embryonic stem cells (ESCs). The protein is sn-1-specific diacylglycerol lipase ABHD11 of Homo sapiens (Human).